The primary structure comprises 277 residues: S-formylglutathione hydrolase FrmB (277 aa).

Catalysis depends on charge relay system residues Ser145, Asp221, and His254.

It belongs to the esterase D family.

It carries out the reaction S-formylglutathione + H2O = formate + glutathione + H(+). Its function is as follows. Serine hydrolase involved in the detoxification of formaldehyde. Hydrolyzes S-formylglutathione to glutathione and formate. The polypeptide is S-formylglutathione hydrolase FrmB (frmB) (Escherichia coli O1:K1 / APEC).